The sequence spans 347 residues: MIKLSKKYCLGISFVLYILLSVCEGHKNLTCDFNDVYKLEFHPNQQTSVTKLCNLTPNVLEKVTIKCGSDKLNYNLYPPTCFEEVYASRNMMHLKKIKEFVIGSSMFMRRSLTPNKINEVSFRIPPNMMPEKPIYCFCENKKTITINGSNGNPSSKKDIINRGIVEIIIPSLNEKVKGCDFTTSESTIFSKGYSINEISNKSSNNQQDIVCTVKAHANDLIGFKCPSNYSVEPHDCFVSAFNLSGKNENLENKLKLTNIIMDHYNNTFYSRLPSLISDNWKFFCVCSKDNEKKLVFTVEASISSSNTKLASRDNTYQDYISNSSFLTLSSYCAFITFIITSFLSFIL.

An N-terminal signal peptide occupies residues 1 to 25 (MIKLSKKYCLGISFVLYILLSVCEG). 6-Cys domains lie at 27-172 (KNLT…IPSL) and 175-305 (KVKG…ISSS). Asn-28 carries an N-linked (GlcNAc...) asparagine glycan. Disulfide bonds link Cys-31–Cys-53, Cys-67–Cys-138, and Cys-81–Cys-136. 6 N-linked (GlcNAc...) asparagine glycosylation sites follow: Asn-147, Asn-200, Asn-228, Asn-242, Asn-265, and Asn-322. 3 cysteine pairs are disulfide-bonded: Cys-179/Cys-211, Cys-225/Cys-286, and Cys-236/Cys-284. Asn-322 carries the GPI-anchor amidated asparagine lipid modification. A propeptide spans 323-347 (SSFLTLSSYCAFITFIITSFLSFIL) (removed in mature form).

In terms of assembly, heterodimer; heterodimerizes with PF41. May form an antiparallel heterodimer with PF41. Post-translationally, processed into a soluble form.

It is found in the cell surface. The protein resides in the cell membrane. The protein is Merozoite surface protein P12 (PF12) of Plasmodium falciparum (isolate 3D7).